Reading from the N-terminus, the 122-residue chain is Fluoride-specific ion channel FluC (122 aa).

4 helical membrane-spanning segments follow: residues 1–21 (MYAF…RHYL), 35–55 (WAIL…SAYL), 67–87 (FLLT…LNLI), and 98–118 (FLNL…GFWL). Gly74 and Thr77 together coordinate Na(+).

This sequence belongs to the fluoride channel Fluc/FEX (TC 1.A.43) family.

The protein localises to the cell inner membrane. It carries out the reaction fluoride(in) = fluoride(out). Na(+) is not transported, but it plays an essential structural role and its presence is essential for fluoride channel function. Functionally, fluoride-specific ion channel. Important for reducing fluoride concentration in the cell, thus reducing its toxicity. This is Fluoride-specific ion channel FluC from Dichelobacter nodosus (strain VCS1703A).